The primary structure comprises 358 residues: Anhydro-N-acetylmuramic acid kinase (358 aa).

9–16 (GTSLDGVD) contacts ATP.

Belongs to the anhydro-N-acetylmuramic acid kinase family.

It catalyses the reaction 1,6-anhydro-N-acetyl-beta-muramate + ATP + H2O = N-acetyl-D-muramate 6-phosphate + ADP + H(+). The protein operates within amino-sugar metabolism; 1,6-anhydro-N-acetylmuramate degradation. Its pathway is cell wall biogenesis; peptidoglycan recycling. Catalyzes the specific phosphorylation of 1,6-anhydro-N-acetylmuramic acid (anhMurNAc) with the simultaneous cleavage of the 1,6-anhydro ring, generating MurNAc-6-P. Is required for the utilization of anhMurNAc either imported from the medium or derived from its own cell wall murein, and thus plays a role in cell wall recycling. The chain is Anhydro-N-acetylmuramic acid kinase from Acidiphilium cryptum (strain JF-5).